The sequence spans 54 residues: uncharacterized protein (54 aa).

The tract at residues 13–54 (VAGDSGGNPENISIGTTSGAVVNKGPEQIPKKKKEESKEKEE) is disordered. Over residues 20–32 (NPENISIGTTSGA) the composition is skewed to polar residues. The span at 41–54 (IPKKKKEESKEKEE) shows a compositional bias: basic and acidic residues.

This is an uncharacterized protein from Enterobacteria phage T4 (Bacteriophage T4).